A 685-amino-acid chain; its full sequence is Probable inactive leucine-rich repeat receptor-like protein kinase At1g66830 (685 aa).

Residues 1-21 (MSQLFLILCFILTHFFAIATS) form the signal peptide. At 22–305 (LNDQGLALLS…RRANHHSRLC (284 aa)) the chain is on the extracellular side. 2 N-linked (GlcNAc...) asparagine glycosylation sites follow: N38 and N48. 8 LRR repeats span residues 65–89 (DMRV…IGSL), 90–113 (LSLR…LFGL), 115–136 (GLQS…EIGS), 137–161 (LKSL…LIPC), 162–185 (KKLK…LGSN), 186–210 (LVHL…VGSL), 212–234 (NLKG…SLGN), and 235–260 (LPEL…VLLN). Residue N151 is glycosylated (N-linked (GlcNAc...) asparagine). N-linked (GlcNAc...) asparagine glycosylation occurs at N193. An N-linked (GlcNAc...) asparagine glycan is attached at N247. A helical transmembrane segment spans residues 306-326 (IILTATGGTVAGIIFLASLFI). The Cytoplasmic portion of the chain corresponds to 327-685 (YYLRKASARA…ESFEKLVTSI (359 aa)). In terms of domain architecture, Protein kinase spans 397–682 (KASAFLLGKS…SVLESFEKLV (286 aa)). A phosphoserine mark is found at S399, S480, and S590.

This sequence belongs to the protein kinase superfamily. Ser/Thr protein kinase family.

The protein localises to the cell membrane. The sequence is that of Probable inactive leucine-rich repeat receptor-like protein kinase At1g66830 from Arabidopsis thaliana (Mouse-ear cress).